A 467-amino-acid polypeptide reads, in one-letter code: Dimethylamine methyltransferase MtbB2 (467 aa).

Pyrrolysine 356 is a non-standard amino acid (pyrrolysine).

The protein belongs to the dimethylamine methyltransferase family.

The catalysed reaction is Co(I)-[dimethylamine-specific corrinoid protein] + dimethylamine + H(+) = methyl-Co(III)-[dimethylamine-specific corrinoid protein] + methylamine. It functions in the pathway one-carbon metabolism; methanogenesis from dimethylamine. Functionally, catalyzes the transfer of a methyl group from dimethylamine to the corrinoid cofactor of MtbC. This chain is Dimethylamine methyltransferase MtbB2 (mtbB2), found in Methanosarcina barkeri (strain Fusaro / DSM 804).